The chain runs to 110 residues: Large ribosomal subunit protein uL22 (110 aa).

This sequence belongs to the universal ribosomal protein uL22 family. As to quaternary structure, part of the 50S ribosomal subunit.

In terms of biological role, this protein binds specifically to 23S rRNA; its binding is stimulated by other ribosomal proteins, e.g. L4, L17, and L20. It is important during the early stages of 50S assembly. It makes multiple contacts with different domains of the 23S rRNA in the assembled 50S subunit and ribosome. The globular domain of the protein is located near the polypeptide exit tunnel on the outside of the subunit, while an extended beta-hairpin is found that lines the wall of the exit tunnel in the center of the 70S ribosome. The chain is Large ribosomal subunit protein uL22 from Marinomonas sp. (strain MWYL1).